The primary structure comprises 595 residues: CDPK-related kinase 3 (595 aa).

The tract at residues 1 to 131 (MGQCYGKVNQ…GTEPEQSLDK (131 aa)) is disordered. The N-myristoyl glycine moiety is linked to residue Gly-2. Polar residues predominate over residues 20 to 37 (NTTTYVVSGDGNQIQPLT). The segment covering 111-124 (KPKEGPIPEERGTE) has biased composition (basic and acidic residues). The Protein kinase domain maps to 143–405 (YELGKEVGRG…AVQALTHPWL (263 aa)). ATP-binding positions include 149–157 (VGRGHFGHT) and Lys-175. The active-site Proton acceptor is Asp-271. Ser-311 is subject to Phosphoserine. The residue at position 353 (Ser-353) is a Phosphoserine; by CPK1 and CPK34. The tract at residues 409 to 439 (SRVIPLDILIYKLVKAYLHATPLRRAALKAL) is autoinhibitory domain. The calmodulin binding (CaMBD) stretch occupies residues 428–448 (ATPLRRAALKALAKALTENEL). EF-hand domains follow at residues 446–482 (NELV…ATDA), 483–518 (MRES…IHQL), 519–558 (EAVD…GASA), and 559–588 (YGHL…VTLR). The Ca(2+) site is built by Asn-461, Asp-463, Ser-465, Lys-502, Glu-507, Asn-540, Glu-547, Ser-568, Asp-570, and Lys-572. Ser-574 bears the Phosphoserine mark.

The protein belongs to the protein kinase superfamily. Ser/Thr protein kinase family. CDPK subfamily. Binds calmodulin (CaM) in a calcium-dependent manner. Interacts with GLN1-1. In terms of processing, autophosphorylated. As to expression, ubiquitously expressed with higher levels in siliques and roots, especially at the root cap. Particularly present in vascular bundles of stems and leaves.

Its subcellular location is the cytoplasm. The protein resides in the membrane. It catalyses the reaction L-seryl-[protein] + ATP = O-phospho-L-seryl-[protein] + ADP + H(+). The catalysed reaction is L-threonyl-[protein] + ATP = O-phospho-L-threonyl-[protein] + ADP + H(+). Not activated by calcium. Autophosphorylation may play an important role in the regulation of the kinase activity. Stimulated by magnesium ions (optimum at 10-15 mM) and manganese ions. In terms of biological role, may play a role in signal transduction pathways that involve calcium as a second messenger. Serine/threonine kinase that phosphorylates histone H3 an GLN1-1. The polypeptide is CDPK-related kinase 3 (CRK3) (Arabidopsis thaliana (Mouse-ear cress)).